The following is a 682-amino-acid chain: Potassium-transporting ATPase ATP-binding subunit (682 aa).

The next 4 membrane-spanning stretches (helical) occupy residues 34-54 (PVMF…VAMA), 62-82 (AGFT…ANVA), 219-239 (IALT…TATL), and 254-274 (VLVA…LSAI). The active-site 4-aspartylphosphate intermediate is the Asp307. ATP contacts are provided by residues Asp344, Glu348, 377–384 (FTAQTRMS), and Lys395. Residues Asp518 and Asp522 each coordinate Mg(2+). 3 helical membrane passes run 588 to 608 (FAII…LNVM), 616 to 636 (AILS…PLAL), and 662 to 682 (LVVP…FGLV).

This sequence belongs to the cation transport ATPase (P-type) (TC 3.A.3) family. Type IA subfamily. The system is composed of three essential subunits: KdpA, KdpB and KdpC.

The protein localises to the cell inner membrane. The enzyme catalyses K(+)(out) + ATP + H2O = K(+)(in) + ADP + phosphate + H(+). Functionally, part of the high-affinity ATP-driven potassium transport (or Kdp) system, which catalyzes the hydrolysis of ATP coupled with the electrogenic transport of potassium into the cytoplasm. This subunit is responsible for energy coupling to the transport system and for the release of the potassium ions to the cytoplasm. This is Potassium-transporting ATPase ATP-binding subunit from Enterobacter sp. (strain 638).